Consider the following 554-residue polypeptide: Valerianol synthase TPS1G (554 aa).

Residues Asp307 and Asp311 each coordinate Mg(2+). A DDXXD motif motif is present at residues 326-330 (VQRWD). Mg(2+)-binding residues include Asp452, Ser456, and Glu460.

It belongs to the terpene synthase family. The cofactor is Mg(2+).

It catalyses the reaction (2E,6E)-farnesyl diphosphate + H2O = valerianol + diphosphate. Its pathway is secondary metabolite biosynthesis; terpenoid biosynthesis. Functionally, terpene synthase that catalyzes the biosynthesis of the terpene valerianol, which is a volatile compound of floral scent. The polypeptide is Valerianol synthase TPS1G (Camellia hiemalis (Camellia)).